The primary structure comprises 511 residues: Maturase K (511 aa).

The protein belongs to the intron maturase 2 family. MatK subfamily.

It is found in the plastid. Its subcellular location is the chloroplast. Usually encoded in the trnK tRNA gene intron. Probably assists in splicing its own and other chloroplast group II introns. The polypeptide is Maturase K (Campsis radicans (Trumpet creeper)).